The sequence spans 438 residues: Phospholipase D Y (438 aa).

A signal peptide spans 1–19 (MIINRLFIIIVLFFVNVNS). N-linked (GlcNAc...) asparagine glycosylation occurs at N50. A PLD phosphodiesterase 1 domain is found at 145-172 (GSGVLHTKLIIIDESSAYVGSANADWSS). Active-site residues include H150, K152, and D157. N-linked (GlcNAc...) asparagine glycans are attached at residues N223, N336, and N394. The PLD phosphodiesterase 2 domain occupies 373-399 (YTRVNHAKFMVTEKQSYVGTSNWSQDY).

Belongs to the phospholipase D family.

The catalysed reaction is a 1,2-diacyl-sn-glycero-3-phosphocholine + H2O = a 1,2-diacyl-sn-glycero-3-phosphate + choline + H(+). With respect to regulation, inhibited by butan-1-ol. In terms of biological role, hydrolyzes membrane phospholipids, such as PtdCho (phosphatidylcholine), producing the free headgroup and PtdOH (phosphatidic acid; signaling molecule on its own). This is Phospholipase D Y (pldY) from Dictyostelium discoideum (Social amoeba).